Consider the following 476-residue polypeptide: Lactate utilization protein B (476 aa).

4Fe-4S ferredoxin-type domains are found at residues 304-334 (GGEFQPILQCIRCAACVNACPVYRHVGGHTY) and 353-382 (YDDFKELPYASTLCGACTDACPVKIPLHQL). Residues C313, C316, C319, C323, C366, C369, and C373 each contribute to the [4Fe-4S] cluster site. Positions 452–476 (RDFPAPNKNSFRNWMKHRTKGDEES) are disordered.

It belongs to the LutB/YkgF family.

Functionally, is involved in L-lactate degradation and allows cells to grow with lactate as the sole carbon source. Has probably a role as an electron transporter during oxidation of L-lactate. This Lysinibacillus sphaericus (strain C3-41) protein is Lactate utilization protein B.